Consider the following 485-residue polypeptide: MAAPVERLAGVCAELEQWLGEESGQRNDWAEGEGIVWRLSELFREAQYRELAEPRIFRLILQILSRVSCEIKVATLPAGAFTDTHCQLPAECFRCLRNACVQCASNQDSVRNVGLIEESVRLIQIFGAPHVLQEPALVAFRCGLQFLGNTAAGNRDSQNAVWACAFPDLFLSCLVHDDEKVVTYSSMVLFTCINREKVSTLQDPSKLDVALSVVTAYSKYPDAEWMYLIVMDHFLLCPDLVKAVYLSQSSPERVTLLELILGKISQKEPLSAEESEALQAIAAFLSDCFQTQCKTILKLTSPSACDEEEPIVVTRLLDILCEVTSKNEHLSCLQTCPGLLEAAVDILRLTHLAGKQSMNVFTAAHTMSMGQDLTHAAVGFKAHLIRLIGNLCYQNKENQEKVYQLDGIALILDNCSIDDNNPFLNQWAVFAIRNLTENNDKNQELIASMERQGLADSSLLKSMGLQAEERDGKLLLKSVKKSPAL.

It belongs to the ataxin-10 family.

The protein localises to the cytoplasm. Its subcellular location is the perinuclear region. It localises to the midbody. In terms of biological role, may play a role in the regulation of cytokinesis. May play a role in signaling by stimulating protein glycosylation. Induces neuritogenesis by activating the Ras-MAP kinase pathway and is necessary for the survival of cerebellar neurons. Does not appear to play a major role in ciliogenesis. The chain is Ataxin-10 (atxn10) from Xenopus tropicalis (Western clawed frog).